Consider the following 239-residue polypeptide: Ribosomal RNA small subunit methyltransferase G (239 aa).

S-adenosyl-L-methionine-binding positions include G95, L100, 118–120 (EAT), 146–147 (AE), and R164.

The protein belongs to the methyltransferase superfamily. RNA methyltransferase RsmG family.

It is found in the cytoplasm. The enzyme catalyses guanosine(527) in 16S rRNA + S-adenosyl-L-methionine = N(7)-methylguanosine(527) in 16S rRNA + S-adenosyl-L-homocysteine. Its function is as follows. Specifically methylates the N7 position of guanine in position 527 of 16S rRNA. The sequence is that of Ribosomal RNA small subunit methyltransferase G from Sorangium cellulosum (strain So ce56) (Polyangium cellulosum (strain So ce56)).